Reading from the N-terminus, the 167-residue chain is Small heat shock protein C1 (167 aa).

The sHSP domain occupies 59–167 (PLYESNSIKS…EQDAREITIN (109 aa)).

The protein belongs to the small heat shock protein (HSP20) family.

This is Small heat shock protein C1 (hspC1) from Rickettsia felis (strain ATCC VR-1525 / URRWXCal2) (Rickettsia azadi).